The following is a 99-amino-acid chain: UPF0751 protein BAMEG_A0107 (99 aa).

The protein belongs to the UPF0751 family.

The polypeptide is UPF0751 protein BAMEG_A0107 (Bacillus anthracis (strain CDC 684 / NRRL 3495)).